The sequence spans 189 residues: H/ACA ribonucleoprotein complex subunit 1-like protein 2 (189 aa).

Positions 1–12 (MRPPRGGGSFRG) are enriched in gly residues. Disordered regions lie at residues 1–39 (MRPPRGGGSFRGRGGRDNGGRGRGRGRGRGRFGGGNYDE) and 129–189 (RFLP…RGRA). Over residues 162–177 (GRGAPRGASRGFQPRG) the composition is skewed to low complexity.

It belongs to the GAR1 family. Component of the small nucleolar ribonucleoprotein particle containing H/ACA-type snoRNAs (H/ACA snoRNPs).

It is found in the nucleus. It localises to the nucleolus. Required for ribosome biogenesis. Part of a complex which catalyzes pseudouridylation of rRNA. This involves the isomerization of uridine such that the ribose is subsequently attached to C5, instead of the normal N1. Pseudouridine ('psi') residues may serve to stabilize the conformation of rRNAs. This chain is H/ACA ribonucleoprotein complex subunit 1-like protein 2, found in Arabidopsis thaliana (Mouse-ear cress).